A 97-amino-acid polypeptide reads, in one-letter code: Plastocyanin A/B (97 aa).

The Plastocyanin-like domain maps to 1–97; that stretch reads AEVKLGSDDG…AGMKGEVTVN (97 aa). Cu cation is bound by residues histidine 37, cysteine 82, histidine 85, and methionine 90.

Belongs to the plastocyanin family. It depends on Cu(2+) as a cofactor.

The protein localises to the plastid. Its subcellular location is the chloroplast thylakoid membrane. Participates in electron transfer between P700 and the cytochrome b6-f complex in photosystem I. This Petroselinum crispum (Parsley) protein is Plastocyanin A/B (PETE).